The primary structure comprises 250 residues: 2,3-bisphosphoglycerate-dependent phosphoglycerate mutase (250 aa).

Residues 10 to 17 (RHGESQWN), 23 to 24 (TG), R62, 89 to 92 (ERHY), K100, 116 to 117 (RR), and 185 to 186 (GN) contribute to the substrate site. H11 functions as the Tele-phosphohistidine intermediate in the catalytic mechanism. E89 (proton donor/acceptor) is an active-site residue.

This sequence belongs to the phosphoglycerate mutase family. BPG-dependent PGAM subfamily. As to quaternary structure, homodimer.

The enzyme catalyses (2R)-2-phosphoglycerate = (2R)-3-phosphoglycerate. Its pathway is carbohydrate degradation; glycolysis; pyruvate from D-glyceraldehyde 3-phosphate: step 3/5. Functionally, catalyzes the interconversion of 2-phosphoglycerate and 3-phosphoglycerate. The sequence is that of 2,3-bisphosphoglycerate-dependent phosphoglycerate mutase from Pectobacterium carotovorum subsp. carotovorum (strain PC1).